The primary structure comprises 121 residues: SPbeta prophage-derived uncharacterized protein YorW (121 aa).

The sequence is that of SPbeta prophage-derived uncharacterized protein YorW (yorW) from Bacillus subtilis (strain 168).